The chain runs to 209 residues: MIGLVGKKVGMTRIFTEDGVSIPVTVIEVEANRVTQVKDLANDGYRAIQVTTGAKKANRVTKPEAGHFAKAGVEAGRGLWEFRLADGEEFTVGQNISVELFADVKKVDVTGTSKGKGFAGTVKRWNFRTQDATHGNSLSHRVPGSIGQNQTPGKVFKGKKMAGQLGNERVTVQSLDVVRVDAERNLLLVKGAVPGATGSDLIVKPAVKA.

An N5-methylglutamine modification is found at Gln-150.

The protein belongs to the universal ribosomal protein uL3 family. Part of the 50S ribosomal subunit. Forms a cluster with proteins L14 and L19. Methylated by PrmB.

One of the primary rRNA binding proteins, it binds directly near the 3'-end of the 23S rRNA, where it nucleates assembly of the 50S subunit. In Klebsiella pneumoniae (strain 342), this protein is Large ribosomal subunit protein uL3.